Reading from the N-terminus, the 459-residue chain is MPRMFGTDGVRGLANRDLTAQLALDLGDAAVRVLGDDERSEFESRRRALVGRDTRVSGDFLAAALSAGMSAGGFDVIDAGIIPTPGVAYLTSVLNVEMGAVISASHNPMPDNGIKFFARGGFKLPDTKEDEIEAVLGQDWDRPTGAGVGRVSHDTATATNLYIDHLVSAIAPVGPDKSQPTPLKGLKIVADCANGATSVVAPEALRRAGADVTVINASPDGYNINKNAGSTHPEQLQAMVKASGAVMGVAFDGDADRCLAVDEDGNMVNGDQIMGILARAKKNAGKLNHDTLVVTVMSNLGLKLALRSMGIKTVQTNVGDRYVLEEMLRGDYSLGGEQSGHVINREFATTGDGTLTALTLCNEVVKSGKSLKELAADFPQLPQTLINVPNVDKMAAKTNAKVQAAVEREEKLLGDTGRVLLRPSGTEPLVRVMAEAETQQQADEVCDRLAKVVADELTL.

Ser105 serves as the catalytic Phosphoserine intermediate. Residues Ser105, Asp252, Asp254, and Asp256 each contribute to the Mg(2+) site. The residue at position 105 (Ser105) is a Phosphoserine.

Belongs to the phosphohexose mutase family. Mg(2+) serves as cofactor. In terms of processing, activated by phosphorylation.

It catalyses the reaction alpha-D-glucosamine 1-phosphate = D-glucosamine 6-phosphate. Its function is as follows. Catalyzes the conversion of glucosamine-6-phosphate to glucosamine-1-phosphate. This is Phosphoglucosamine mutase from Bifidobacterium adolescentis (strain ATCC 15703 / DSM 20083 / NCTC 11814 / E194a).